We begin with the raw amino-acid sequence, 401 residues long: DNA replication and repair protein RecF (401 aa).

30–37 (GYNGIGKT) contacts ATP.

This sequence belongs to the RecF family.

The protein resides in the cytoplasm. In terms of biological role, the RecF protein is involved in DNA metabolism; it is required for DNA replication and normal SOS inducibility. RecF binds preferentially to single-stranded, linear DNA. It also seems to bind ATP. The chain is DNA replication and repair protein RecF from Arthrobacter sp. (strain FB24).